The primary structure comprises 1165 residues: Linoleate diol synthase (1165 aa).

A fatty acid alpha-dioxygenase region spans residues 104-448 (TDGLINDLWD…DGAFDDTELV (345 aa)). Histidine 203 serves as a coordination point for heme b. Residues aspartate 204, serine 219, tyrosine 221, aspartate 223, and serine 225 each coordinate Ca(2+). Tyrosine 376 is an active-site residue. A heme b-binding site is contributed by histidine 379. The segment at 666-1161 (EVLSNQKDYK…ATTMKINWEG (496 aa)) is epoxy alcohol synthase. A heme-binding site is contributed by cysteine 1080. Residues 1114–1134 (RSYPASQWPGQAGRPPRDPAW) form a disordered region.

It belongs to the peroxidase family. In terms of assembly, homotetramer. The cofactor is heme b. Requires Ca(2+) as cofactor. Heme serves as cofactor. Post-translationally, the N-terminus is blocked.

It catalyses the reaction (9Z,12Z)-octadecadienoate + O2 = (8R,9Z,12Z)-8-hydroperoxyoctadeca-9,12-dienoate. The catalysed reaction is (8R,9Z,12Z)-8-hydroperoxyoctadeca-9,12-dienoate = (7S,8S,9Z,12Z)-7,8-dihydroxyoctadeca-9,12-dienoate. Its function is as follows. 7,8-linoleate diol synthase is a bifunctional enzyme that converts linoleic acid (18:2n-6) into 8-hydroperoxy-8(E),12(Z)-octadecadienoic acid (8-HPODE) and then catalyzes the isomerization of the resulting hydroperoxide to 7,8-dihydroxy-9(Z),12(Z)-octadecadienoic acid (7,8-DiHODE). This chain is Linoleate diol synthase, found in Gaeumannomyces graminis (Turf grass take-all root rot fungus).